Reading from the N-terminus, the 427-residue chain is Mitochondrial fission protein ELM1 (427 aa).

Interacts with DRP3 and DRP3B.

It localises to the mitochondrion outer membrane. Plant-specific factor involved in mitochondria fission. Is required for the correct localization of DRP3A from the cytosol to mitochondrial fission sites. Does not seem to be required for peroxisomal division. In Arabidopsis thaliana (Mouse-ear cress), this protein is Mitochondrial fission protein ELM1 (ELM1).